Here is a 186-residue protein sequence, read N- to C-terminus: Large ribosomal subunit protein uL16 (186 aa).

Belongs to the universal ribosomal protein uL16 family.

This Nanoarchaeum equitans (strain Kin4-M) protein is Large ribosomal subunit protein uL16.